A 337-amino-acid polypeptide reads, in one-letter code: Adenosine deaminase (337 aa).

Zn(2+)-binding residues include H15 and H17. The substrate site is built by H17, D19, and G172. H199 is a binding site for Zn(2+). The active-site Proton donor is the E202. D279 is a binding site for Zn(2+).

Belongs to the metallo-dependent hydrolases superfamily. Adenosine and AMP deaminases family. Adenosine deaminase subfamily. Zn(2+) serves as cofactor.

The enzyme catalyses adenosine + H2O + H(+) = inosine + NH4(+). It catalyses the reaction 2'-deoxyadenosine + H2O + H(+) = 2'-deoxyinosine + NH4(+). Its function is as follows. Catalyzes the hydrolytic deamination of adenosine and 2-deoxyadenosine. The sequence is that of Adenosine deaminase from Enterococcus faecalis (strain ATCC 700802 / V583).